Here is a 423-residue protein sequence, read N- to C-terminus: Lysosomal acid phosphatase (423 aa).

The N-terminal stretch at 1–30 (MAGKRSGWSRAALLQLLLGVNLVVMPPTRA) is a signal peptide. Topologically, residues 31-380 (RSLRFVTLLY…QLASGPADTE (350 aa)) are lumenal. H42 (nucleophile) is an active-site residue. N-linked (GlcNAc...) asparagine glycosylation is found at N92, N133, N167, N177, N191, and N267. 3 disulfide bridges follow: C159–C370, C212–C310, and C345–C349. D287 acts as the Proton donor in catalysis. N-linked (GlcNAc...) asparagine glycans are attached at residues N322 and N331. Residues 381–401 (VIVALAVCGSILFLLIVLLLT) traverse the membrane as a helical segment. At 402–423 (VLFRMQAQPPGYRHVADGEDHA) the chain is on the cytoplasmic side.

The protein belongs to the histidine acid phosphatase family. Post-translationally, the membrane-bound form is converted to the soluble form by sequential proteolytic processing. First, the C-terminal cytoplasmic tail is removed. Cleavage by a lysosomal protease releases the soluble form in the lysosome lumen. In terms of processing, N-glycosylated. The intermediates formed during enzymatic deglycosylation suggest that all eight predicted N-glycosylation sites are used.

It is found in the lysosome membrane. Its subcellular location is the lysosome lumen. The catalysed reaction is a phosphate monoester + H2O = an alcohol + phosphate. This chain is Lysosomal acid phosphatase (ACP2), found in Homo sapiens (Human).